Here is a 107-residue protein sequence, read N- to C-terminus: Iron-sulfur cluster assembly protein CyaY (107 aa).

This sequence belongs to the frataxin family.

In terms of biological role, involved in iron-sulfur (Fe-S) cluster assembly. May act as a regulator of Fe-S biogenesis. The protein is Iron-sulfur cluster assembly protein CyaY of Thioalkalivibrio sulfidiphilus (strain HL-EbGR7).